The following is a 92-amino-acid chain: Acyl carrier protein (92 aa).

Positions 1–84 (MPSTADERQL…QIAAHLAEAV (84 aa)) constitute a Carrier domain. Serine 44 bears the O-(pantetheine 4'-phosphoryl)serine mark.

The protein belongs to the acyl carrier protein (ACP) family. 4'-phosphopantetheine is transferred from CoA to a specific serine of apo-ACP by AcpS. This modification is essential for activity because fatty acids are bound in thioester linkage to the sulfhydryl of the prosthetic group.

The protein localises to the cytoplasm. It functions in the pathway lipid metabolism; fatty acid biosynthesis. In terms of biological role, carrier of the growing fatty acid chain in fatty acid biosynthesis. The protein is Acyl carrier protein of Streptomyces coelicolor (strain ATCC BAA-471 / A3(2) / M145).